The following is a 419-amino-acid chain: Putative zinc metalloprotease SPy_1963/M5005_Spy1674 (419 aa).

Histidine 18 contributes to the Zn(2+) binding site. Glutamate 19 is a catalytic residue. Zn(2+) is bound at residue histidine 22. 4 helical membrane-spanning segments follow: residues 169-191 (LITNFAGPMNNFILGIVVFILLV), 301-323 (LAWSRAFTILNALKGLITGFSLN), 343-365 (LESVLSLMAMLSINLGIFNLIPI), and 392-411 (AYITLAGVAIMVVLMIAVTW). The 100-residue stretch at 175–274 (GPMNNFILGI…LKTVAVKPQK (100 aa)) folds into the PDZ domain.

Belongs to the peptidase M50B family. Zn(2+) is required as a cofactor.

It localises to the cell membrane. This is Putative zinc metalloprotease SPy_1963/M5005_Spy1674 from Streptococcus pyogenes serotype M1.